The sequence spans 665 residues: Putative phospholipid:diacylglycerol acyltransferase 2 (665 aa).

The helical transmembrane segment at 48–68 (LIGYLCTAWWLLLFLYHSVPV) threads the bilayer. Catalysis depends on S237, which acts as the Acyl-ester intermediate. Catalysis depends on charge relay system residues D567 and H620.

Belongs to the AB hydrolase superfamily. Lipase family.

The protein localises to the membrane. It catalyses the reaction a glycerophospholipid + a 1,2-diacyl-sn-glycerol = a monoacylglycerophospholipid + a triacyl-sn-glycerol. This chain is Putative phospholipid:diacylglycerol acyltransferase 2 (PDAT2), found in Arabidopsis thaliana (Mouse-ear cress).